The primary structure comprises 252 residues: Enolase-phosphatase E1 (252 aa).

Residues D14 and E16 each contribute to the Mg(2+) site. Residues 143 to 144 (SS) and K177 contribute to the substrate site. D202 lines the Mg(2+) pocket.

Belongs to the HAD-like hydrolase superfamily. MasA/MtnC family. In terms of assembly, monomer. Requires Mg(2+) as cofactor.

It localises to the cytoplasm. The protein localises to the nucleus. It catalyses the reaction 5-methylsulfanyl-2,3-dioxopentyl phosphate + H2O = 1,2-dihydroxy-5-(methylsulfanyl)pent-1-en-3-one + phosphate. It functions in the pathway amino-acid biosynthesis; L-methionine biosynthesis via salvage pathway; L-methionine from S-methyl-5-thio-alpha-D-ribose 1-phosphate: step 3/6. The protein operates within amino-acid biosynthesis; L-methionine biosynthesis via salvage pathway; L-methionine from S-methyl-5-thio-alpha-D-ribose 1-phosphate: step 4/6. Bifunctional enzyme that catalyzes the enolization of 2,3-diketo-5-methylthiopentyl-1-phosphate (DK-MTP-1-P) into the intermediate 2-hydroxy-3-keto-5-methylthiopentenyl-1-phosphate (HK-MTPenyl-1-P), which is then dephosphorylated to form the acireductone 1,2-dihydroxy-3-keto-5-methylthiopentene (DHK-MTPene). This chain is Enolase-phosphatase E1, found in Drosophila pseudoobscura pseudoobscura (Fruit fly).